A 231-amino-acid polypeptide reads, in one-letter code: ATP phosphoribosyltransferase (231 aa).

It belongs to the ATP phosphoribosyltransferase family. Short subfamily. In terms of assembly, heteromultimer composed of HisG and HisZ subunits.

It is found in the cytoplasm. It carries out the reaction 1-(5-phospho-beta-D-ribosyl)-ATP + diphosphate = 5-phospho-alpha-D-ribose 1-diphosphate + ATP. The protein operates within amino-acid biosynthesis; L-histidine biosynthesis; L-histidine from 5-phospho-alpha-D-ribose 1-diphosphate: step 1/9. In terms of biological role, catalyzes the condensation of ATP and 5-phosphoribose 1-diphosphate to form N'-(5'-phosphoribosyl)-ATP (PR-ATP). Has a crucial role in the pathway because the rate of histidine biosynthesis seems to be controlled primarily by regulation of HisG enzymatic activity. In Psychrobacter arcticus (strain DSM 17307 / VKM B-2377 / 273-4), this protein is ATP phosphoribosyltransferase.